The chain runs to 332 residues: MTNINRLSMSTMFNALHEILNEEPLAIPPPPSRGGYSYFHIRTTEMDLQRMFNFMTGSEDLKDDISVLDTGMLMWMASFLTSDSDYFMVITRNKNGSKSLQKLMRMSDDMDVFFFVAIMRLFIHVMIDKYASYVAIQGMRIFKQDKRELMYDHILRYALFLARDQYGCIALNEIIKELDDPYYRDELMDIVSNNALLLSNDAYGNFVVQHVLKLHDSRCTGNIADKLCGYCVELSFKKYGSYIVERLLEVRDIPMATIVLDLLACKTEMLIRLARSENGNFVVCKLLELTNDILTADLFYSLVNKLRPYRFLLHRFPESKIVAILGSMRVPN.

The 302-residue stretch at 1–302 folds into the PUM-HD domain; that stretch reads MTNINRLSMS…ILTADLFYSL (302 aa). Residues 82 to 117 form a Pumilio 1 repeat; sequence SDSDYFMVITRNKNGSKSLQKLMRMSDDMDVFFFVA. One copy of the Pumilio 2; degenerate repeat lies at 118-152; sequence IMRLFIHVMIDKYASYVAIQGMRIFKQDKRELMYD. Pumilio repeat units follow at residues 153–188, 189–225, 226–264, and 265–300; these read HILRYALFLARDQYGCIALNEIIKELDDPYYRDELM, DIVSNNALLLSNDAYGNFVVQHVLKLHDSRCTGNIAD, KLCGYCVELSFKKYGSYIVERLLEVRDIPMATIVLDLLA, and CKTEMLIRLARSENGNFVVCKLLELTNDILTADLFY.

The protein resides in the cytoplasm. In terms of biological role, sequence-specific RNA-binding protein that regulates translation and mRNA stability by binding the 3'-UTR of target mRNAs. The sequence is that of Putative pumilio homolog 17 (APUM17) from Arabidopsis thaliana (Mouse-ear cress).